Reading from the N-terminus, the 159-residue chain is Phosphoribosylaminoimidazole carboxylase (159 aa).

6 residues coordinate substrate: Ser11, Asp14, Ser38, Lys41, Gly67, and Ser69.

The catalysed reaction is 5-amino-1-(5-phospho-D-ribosyl)imidazole-4-carboxylate + H(+) = 5-amino-1-(5-phospho-beta-D-ribosyl)imidazole + CO2. It functions in the pathway purine metabolism; IMP biosynthesis via de novo pathway; 5-amino-1-(5-phospho-D-ribosyl)imidazole-4-carboxylate from 5-amino-1-(5-phospho-D-ribosyl)imidazole (carboxylase route): step 1/1. In terms of biological role, catalyzes the reversible conversion of 5-aminoimidazole ribonucleotide (AIR) and CO(2) to 4-carboxy-5-aminoimidazole ribonucleotide (CAIR). Does not accept N5-carboxyaminoimidazole ribonucleotide (N5-CAIR) as a substrate. The sequence is that of Phosphoribosylaminoimidazole carboxylase from Treponema denticola (strain ATCC 35405 / DSM 14222 / CIP 103919 / JCM 8153 / KCTC 15104).